The following is a 102-amino-acid chain: Small ribosomal subunit protein uS10 (102 aa).

This sequence belongs to the universal ribosomal protein uS10 family. As to quaternary structure, part of the 30S ribosomal subunit.

Functionally, involved in the binding of tRNA to the ribosomes. This is Small ribosomal subunit protein uS10 from Sulfolobus acidocaldarius (strain ATCC 33909 / DSM 639 / JCM 8929 / NBRC 15157 / NCIMB 11770).